Consider the following 255-residue polypeptide: Thiazole synthase (255 aa).

K96 acts as the Schiff-base intermediate with DXP in catalysis. 1-deoxy-D-xylulose 5-phosphate-binding positions include G157, 183 to 184, and 205 to 206; these read AG and NS.

This sequence belongs to the ThiG family. Homotetramer. Forms heterodimers with either ThiH or ThiS.

The protein localises to the cytoplasm. The enzyme catalyses [ThiS sulfur-carrier protein]-C-terminal-Gly-aminoethanethioate + 2-iminoacetate + 1-deoxy-D-xylulose 5-phosphate = [ThiS sulfur-carrier protein]-C-terminal Gly-Gly + 2-[(2R,5Z)-2-carboxy-4-methylthiazol-5(2H)-ylidene]ethyl phosphate + 2 H2O + H(+). It participates in cofactor biosynthesis; thiamine diphosphate biosynthesis. Catalyzes the rearrangement of 1-deoxy-D-xylulose 5-phosphate (DXP) to produce the thiazole phosphate moiety of thiamine. Sulfur is provided by the thiocarboxylate moiety of the carrier protein ThiS. In vitro, sulfur can be provided by H(2)S. The protein is Thiazole synthase of Staphylococcus carnosus (strain TM300).